Consider the following 302-residue polypeptide: N-acetyl-D-glucosamine kinase (302 aa).

ATP contacts are provided by residues 4–11 (GFDVGGTK) and 133–140 (GFGGGLVY). H157, C177, C179, and C184 together coordinate Zn(2+).

Belongs to the ROK (NagC/XylR) family. NagK subfamily.

It carries out the reaction N-acetyl-D-glucosamine + ATP = N-acetyl-D-glucosamine 6-phosphate + ADP + H(+). The protein operates within cell wall biogenesis; peptidoglycan recycling. Its function is as follows. Catalyzes the phosphorylation of N-acetyl-D-glucosamine (GlcNAc) derived from cell-wall degradation, yielding GlcNAc-6-P. The polypeptide is N-acetyl-D-glucosamine kinase (Vibrio atlanticus (strain LGP32) (Vibrio splendidus (strain Mel32))).